A 126-amino-acid chain; its full sequence is Aspartate 1-decarboxylase (126 aa).

S25 functions as the Schiff-base intermediate with substrate; via pyruvic acid in the catalytic mechanism. A Pyruvic acid (Ser) modification is found at S25. T57 is a substrate binding site. The Proton donor role is filled by Y58. 73-75 (GAA) contributes to the substrate binding site.

This sequence belongs to the PanD family. In terms of assembly, heterooctamer of four alpha and four beta subunits. Pyruvate serves as cofactor. Post-translationally, is synthesized initially as an inactive proenzyme, which is activated by self-cleavage at a specific serine bond to produce a beta-subunit with a hydroxyl group at its C-terminus and an alpha-subunit with a pyruvoyl group at its N-terminus.

The protein resides in the cytoplasm. The catalysed reaction is L-aspartate + H(+) = beta-alanine + CO2. The protein operates within cofactor biosynthesis; (R)-pantothenate biosynthesis; beta-alanine from L-aspartate: step 1/1. In terms of biological role, catalyzes the pyruvoyl-dependent decarboxylation of aspartate to produce beta-alanine. This is Aspartate 1-decarboxylase from Escherichia coli O6:H1 (strain CFT073 / ATCC 700928 / UPEC).